Here is a 349-residue protein sequence, read N- to C-terminus: tRNA N6-adenosine threonylcarbamoyltransferase (349 aa).

Positions 113 and 117 each coordinate Fe cation. Substrate-binding positions include 135-139 (LVSGG), aspartate 169, glycine 182, aspartate 186, and asparagine 281. Residue aspartate 309 coordinates Fe cation.

Belongs to the KAE1 / TsaD family. It depends on Fe(2+) as a cofactor.

Its subcellular location is the cytoplasm. The catalysed reaction is L-threonylcarbamoyladenylate + adenosine(37) in tRNA = N(6)-L-threonylcarbamoyladenosine(37) in tRNA + AMP + H(+). Functionally, required for the formation of a threonylcarbamoyl group on adenosine at position 37 (t(6)A37) in tRNAs that read codons beginning with adenine. Is involved in the transfer of the threonylcarbamoyl moiety of threonylcarbamoyl-AMP (TC-AMP) to the N6 group of A37, together with TsaE and TsaB. TsaD likely plays a direct catalytic role in this reaction. This chain is tRNA N6-adenosine threonylcarbamoyltransferase, found in Corynebacterium aurimucosum (strain ATCC 700975 / DSM 44827 / CIP 107346 / CN-1) (Corynebacterium nigricans).